We begin with the raw amino-acid sequence, 115 residues long: Protein VCF2 (115 aa).

Basic residues predominate over residues 1–12 (MGGCPVRKRRRN). The tract at residues 1–70 (MGGCPVRKRR…GPEGNLNQIV (70 aa)) is disordered. Over residues 33–44 (FQDSQDTEFSWS) the composition is skewed to polar residues.

It belongs to the VCF family.

The protein is Protein VCF2 of Homo sapiens (Human).